A 467-amino-acid chain; its full sequence is 5-phosphohydroxy-L-lysine phospho-lyase (467 aa).

Lys278 is modified (N6-(pyridoxal phosphate)lysine).

Belongs to the class-III pyridoxal-phosphate-dependent aminotransferase family. In terms of assembly, homotetramer. Pyridoxal 5'-phosphate serves as cofactor.

The protein resides in the mitochondrion. It catalyses the reaction (5R)-5-phosphooxy-L-lysine + H2O = (S)-2-amino-6-oxohexanoate + NH4(+) + phosphate. Its function is as follows. Catalyzes the pyridoxal-phosphate-dependent breakdown of 5-phosphohydroxy-L-lysine, converting it to ammonia, inorganic phosphate and 2-aminoadipate semialdehyde. The protein is 5-phosphohydroxy-L-lysine phospho-lyase (Phykpl) of Mus musculus (Mouse).